Consider the following 235-residue polypeptide: Ribonuclease 3 (235 aa).

The 126-residue stretch at 6–131 (IDQLKKLTGH…LIAVIYLDGG (126 aa)) folds into the RNase III domain. Glutamate 44 provides a ligand contact to Mg(2+). Residue aspartate 48 is part of the active site. Aspartate 117 and glutamate 120 together coordinate Mg(2+). The active site involves glutamate 120. Residues 156 to 225 (DAKTELQEWA…AEKILRREGM (70 aa)) enclose the DRBM domain.

Belongs to the ribonuclease III family. Homodimer. Requires Mg(2+) as cofactor.

The protein localises to the cytoplasm. It carries out the reaction Endonucleolytic cleavage to 5'-phosphomonoester.. Digests double-stranded RNA. Involved in the processing of primary rRNA transcript to yield the immediate precursors to the large and small rRNAs (23S and 16S). Processes some mRNAs, and tRNAs when they are encoded in the rRNA operon. Processes pre-crRNA and tracrRNA of type II CRISPR loci if present in the organism. This chain is Ribonuclease 3, found in Bartonella bacilliformis (strain ATCC 35685 / KC583 / Herrer 020/F12,63).